The primary structure comprises 240 residues: Uridylate kinase (240 aa).

12–15 (KLSG) contacts ATP. The interval 20 to 25 (GEQGNG) is involved in allosteric activation by GTP. A UMP-binding site is contributed by G54. G55 and R59 together coordinate ATP. UMP-binding positions include D74 and 135-142 (TGNPYFST). 3 residues coordinate ATP: N163, Y169, and D172.

It belongs to the UMP kinase family. As to quaternary structure, homohexamer.

The protein localises to the cytoplasm. The catalysed reaction is UMP + ATP = UDP + ADP. The protein operates within pyrimidine metabolism; CTP biosynthesis via de novo pathway; UDP from UMP (UMPK route): step 1/1. Allosterically activated by GTP. Inhibited by UTP. Its function is as follows. Catalyzes the reversible phosphorylation of UMP to UDP. This chain is Uridylate kinase, found in Bacillus velezensis (strain DSM 23117 / BGSC 10A6 / LMG 26770 / FZB42) (Bacillus amyloliquefaciens subsp. plantarum).